We begin with the raw amino-acid sequence, 226 residues long: Eukaryotic translation initiation factor 3 subunit K (226 aa).

Residues 42–200 (YNLDANLSLL…QLIVLPRNEF (159 aa)) form the PCI domain.

The protein belongs to the eIF-3 subunit K family. As to quaternary structure, component of the eukaryotic translation initiation factor 3 (eIF-3) complex.

The protein localises to the cytoplasm. Component of the eukaryotic translation initiation factor 3 (eIF-3) complex, which is involved in protein synthesis of a specialized repertoire of mRNAs and, together with other initiation factors, stimulates binding of mRNA and methionyl-tRNAi to the 40S ribosome. The eIF-3 complex specifically targets and initiates translation of a subset of mRNAs involved in cell proliferation. In Oryza sativa subsp. japonica (Rice), this protein is Eukaryotic translation initiation factor 3 subunit K (TIF3K1).